Consider the following 356-residue polypeptide: UDP-N-acetylglucosamine--N-acetylmuramyl-(pentapeptide) pyrophosphoryl-undecaprenol N-acetylglucosamine transferase (356 aa).

Residues 12 to 14 (TGG), Asn124, Arg163, Ser188, Ile242, 261 to 266 (ALTVSE), and Gln287 contribute to the UDP-N-acetyl-alpha-D-glucosamine site.

The protein belongs to the glycosyltransferase 28 family. MurG subfamily.

It is found in the cell inner membrane. It catalyses the reaction di-trans,octa-cis-undecaprenyl diphospho-N-acetyl-alpha-D-muramoyl-L-alanyl-D-glutamyl-meso-2,6-diaminopimeloyl-D-alanyl-D-alanine + UDP-N-acetyl-alpha-D-glucosamine = di-trans,octa-cis-undecaprenyl diphospho-[N-acetyl-alpha-D-glucosaminyl-(1-&gt;4)]-N-acetyl-alpha-D-muramoyl-L-alanyl-D-glutamyl-meso-2,6-diaminopimeloyl-D-alanyl-D-alanine + UDP + H(+). It functions in the pathway cell wall biogenesis; peptidoglycan biosynthesis. Functionally, cell wall formation. Catalyzes the transfer of a GlcNAc subunit on undecaprenyl-pyrophosphoryl-MurNAc-pentapeptide (lipid intermediate I) to form undecaprenyl-pyrophosphoryl-MurNAc-(pentapeptide)GlcNAc (lipid intermediate II). This Ectopseudomonas mendocina (strain ymp) (Pseudomonas mendocina) protein is UDP-N-acetylglucosamine--N-acetylmuramyl-(pentapeptide) pyrophosphoryl-undecaprenol N-acetylglucosamine transferase.